Here is a 374-residue protein sequence, read N- to C-terminus: tRNA-specific 2-thiouridylase MnmA (374 aa).

ATP contacts are provided by residues 17–24 and methionine 43; that span reads GMSGGVDS. Residues 103–105 are interaction with target base in tRNA; sequence NPD. The active-site Nucleophile is cysteine 108. Residues cysteine 108 and cysteine 204 are joined by a disulfide bond. Glycine 132 contributes to the ATP binding site. Residues 154–156 are interaction with tRNA; it reads KDQ. Residue cysteine 204 is the Cysteine persulfide intermediate of the active site. The interaction with tRNA stretch occupies residues 316–317; it reads RY.

The protein belongs to the MnmA/TRMU family.

It is found in the cytoplasm. The catalysed reaction is S-sulfanyl-L-cysteinyl-[protein] + uridine(34) in tRNA + AH2 + ATP = 2-thiouridine(34) in tRNA + L-cysteinyl-[protein] + A + AMP + diphosphate + H(+). In terms of biological role, catalyzes the 2-thiolation of uridine at the wobble position (U34) of tRNA, leading to the formation of s(2)U34. This is tRNA-specific 2-thiouridylase MnmA from Pseudomonas fluorescens (strain SBW25).